Here is a 175-residue protein sequence, read N- to C-terminus: NADH-ubiquinone oxidoreductase chain 6 (175 aa).

Transmembrane regions (helical) follow at residues 1–21 (MMTY…VGFS), 25–45 (SPIY…GIIM), 47–67 (FGGS…MLVV), 88–108 (TVMG…LYVL), and 149–169 (YGAW…LVIL).

This sequence belongs to the complex I subunit 6 family. Core subunit of respiratory chain NADH dehydrogenase (Complex I) which is composed of 45 different subunits.

The protein resides in the mitochondrion inner membrane. It catalyses the reaction a ubiquinone + NADH + 5 H(+)(in) = a ubiquinol + NAD(+) + 4 H(+)(out). Its function is as follows. Core subunit of the mitochondrial membrane respiratory chain NADH dehydrogenase (Complex I) which catalyzes electron transfer from NADH through the respiratory chain, using ubiquinone as an electron acceptor. Essential for the catalytic activity and assembly of complex I. The sequence is that of NADH-ubiquinone oxidoreductase chain 6 (MT-ND6) from Equus caballus (Horse).